The sequence spans 257 residues: 3-dehydroquinate dehydratase (257 aa).

3-dehydroquinate is bound by residues 50–52 (EWR) and Arg-86. His-147 functions as the Proton donor/acceptor in the catalytic mechanism. The Schiff-base intermediate with substrate role is filled by Lys-174. The 3-dehydroquinate site is built by Arg-216, Ser-235, and Gln-239.

This sequence belongs to the type-I 3-dehydroquinase family. In terms of assembly, homodimer.

The catalysed reaction is 3-dehydroquinate = 3-dehydroshikimate + H2O. The protein operates within metabolic intermediate biosynthesis; chorismate biosynthesis; chorismate from D-erythrose 4-phosphate and phosphoenolpyruvate: step 3/7. Its function is as follows. Involved in the third step of the chorismate pathway, which leads to the biosynthesis of aromatic amino acids. Catalyzes the cis-dehydration of 3-dehydroquinate (DHQ) and introduces the first double bond of the aromatic ring to yield 3-dehydroshikimate. The protein is 3-dehydroquinate dehydratase of Geobacillus kaustophilus (strain HTA426).